The primary structure comprises 36 residues: Fructose-1,6-/sedoheptulose-1,7-bisphosphate aldolase (36 aa).

This is Fructose-1,6-/sedoheptulose-1,7-bisphosphate aldolase (cbbA) from Nitrobacter vulgaris.